The sequence spans 459 residues: WD repeat-containing protein 41 (459 aa).

6 WD repeats span residues 40–79 (KAHH…KLLE), 82–128 (GHTQ…QVQR), 131–168 (CFQS…LCKT), 220–258 (DHQD…MQAY), 321–359 (AHDS…QLAA), and 403–441 (GHSS…SGLR).

Component of the C9orf72-SMCR8 complex, at least composed of C9orf72, SMCR8 and WDR41. The complex is formed of two protomers, each individually consisting of one molecule each of C9orf72, SMCR8 and WDR41. The protomers homodimerize via an interaction between C9orf72 (via C-terminus) and SMCR8 (via N-terminus). Within each protomer SMCR8 (via DENN domain) acts as a bridging protein between WDR41 (via C-terminus and N-terminus) and C9orf72 (via C-terminus). The C9orf72-SMCR8 complex associates with the ULK1/ATG1 kinase complex.

Its subcellular location is the cytoplasm. In terms of biological role, non-catalytic component of the C9orf72-SMCR8 complex, a complex that has guanine nucleotide exchange factor (GEF) activity and regulates autophagy. The C9orf72-SMCR8 complex promotes the exchange of GDP to GTP, converting inactive GDP-bound RAB8A and RAB39B into their active GTP-bound form, thereby promoting autophagosome maturation. As part of the C9orf72-SMCR8 complex, stimulates RAB8A and RAB11A GTPase activity in vitro, however WDR42 is shown not be an essential complex component for this function. The C9orf72-SMCR8 complex also acts as a negative regulator of autophagy initiation by interacting with the ULK1/ATG1 kinase complex and inhibiting its protein kinase activity. This Homo sapiens (Human) protein is WD repeat-containing protein 41.